A 244-amino-acid chain; its full sequence is tRNA (guanine-N(7)-)-methyltransferase (244 aa).

S-adenosyl-L-methionine contacts are provided by Glu75, Glu100, Asp127, and Asp150. Residue Asp150 is part of the active site. Substrate-binding positions include Lys154, Asp186, and 223-226 (TRFE).

It belongs to the class I-like SAM-binding methyltransferase superfamily. TrmB family.

The catalysed reaction is guanosine(46) in tRNA + S-adenosyl-L-methionine = N(7)-methylguanosine(46) in tRNA + S-adenosyl-L-homocysteine. It participates in tRNA modification; N(7)-methylguanine-tRNA biosynthesis. In terms of biological role, catalyzes the formation of N(7)-methylguanine at position 46 (m7G46) in tRNA. The protein is tRNA (guanine-N(7)-)-methyltransferase of Xylella fastidiosa (strain 9a5c).